The following is a 269-amino-acid chain: Eukaryotic translation initiation factor 3 subunit G-1 (269 aa).

Residues alanine 188 to proline 266 form the RRM domain.

It belongs to the eIF-3 subunit G family. As to quaternary structure, component of the eukaryotic translation initiation factor 3 (eIF-3) complex. The eIF-3 complex interacts with pix.

Its subcellular location is the cytoplasm. Its function is as follows. RNA-binding component of the eukaryotic translation initiation factor 3 (eIF-3) complex, which is involved in protein synthesis of a specialized repertoire of mRNAs and, together with other initiation factors, stimulates binding of mRNA and methionyl-tRNAi to the 40S ribosome. The eIF-3 complex specifically targets and initiates translation of a subset of mRNAs involved in cell proliferation. This subunit can bind 18S rRNA. In Drosophila persimilis (Fruit fly), this protein is Eukaryotic translation initiation factor 3 subunit G-1.